The sequence spans 402 residues: MHLYFYCLILLFVPGGNSLGINSYLKHMSNKPQDHVNRTKTVDSKDLAALPLSSYMLNLYQSFHHSELNHGTEGAPSLPSNHRADIIRSLAAKSFDHGGSRWTLVFDFSSLSQEEEHQLAEVRFDFRAFEGAISAEMEVMVDFLHQSSSCQSISGWCQSYLYVGSLTGTLRSRSSDTWVTFEATDIIHKWFERNEKGKSRYEDREKQLKKLPRAKSAERRYQQQNTEDQQIVMMVYSNISKKERLSGTATLLQDAAHSKYLVVMPGIQTIAHTRRHRRSHIFKEHVMGMKHVPPADSSRTLCRRVDFFVDFKQIGWDSWIIHPMKYNAYRCEGECPSPVNESVKPNNHAYMQSLLNYYVKGKAPEVCCVPIRMSSLSMVYYDHDDIAFQNHEGMIVEECGCQ.

The first 18 residues, M1 to S18, serve as a signal peptide directing secretion. Residues L19–R278 constitute a propeptide that is removed on maturation. 3 N-linked (GlcNAc...) asparagine glycosylation sites follow: N37, N238, and N340. 3 disulfides stabilise this stretch: C302/C368, C331/C399, and C335/C401.

It belongs to the TGF-beta family. In terms of assembly, homodimer; disulfide-linked. In terms of tissue distribution, during blastula stages, expressed in the endoderm at a higher level dorsally than ventrally. Expressed in the deep cells of the Spemann organizer at the gastrula stage. Expressed in the notochord (a derivative of the organizer) and neural tube during the neural stages.

It is found in the secreted. In terms of biological role, cooperation and regulatory loops of multiple nodals are essential for mesendoderm patterning in early embryos. Plays a role in mesoderm formation and may be required for neural development. The polypeptide is Nodal homolog 4-A (nodal4-a) (Xenopus laevis (African clawed frog)).